The following is a 212-amino-acid chain: Phosphoribosylglycinamide formyltransferase (212 aa).

11–13 contributes to the N(1)-(5-phospho-beta-D-ribosyl)glycinamide binding site; the sequence is GSN. Residues arginine 64, 89–92, and asparagine 106 each bind (6R)-10-formyltetrahydrofolate; that span reads MRIL. Histidine 108 serves as the catalytic Proton donor. 140–144 provides a ligand contact to (6R)-10-formyltetrahydrofolate; that stretch reads TDELD. 170 to 173 contributes to the N(1)-(5-phospho-beta-D-ribosyl)glycinamide binding site; sequence QTQE.

It belongs to the GART family. Monomer. Homodimer below pH 6.8.

It carries out the reaction N(1)-(5-phospho-beta-D-ribosyl)glycinamide + (6R)-10-formyltetrahydrofolate = N(2)-formyl-N(1)-(5-phospho-beta-D-ribosyl)glycinamide + (6S)-5,6,7,8-tetrahydrofolate + H(+). It participates in purine metabolism; IMP biosynthesis via de novo pathway; N(2)-formyl-N(1)-(5-phospho-D-ribosyl)glycinamide from N(1)-(5-phospho-D-ribosyl)glycinamide (10-formyl THF route): step 1/1. Inhibited by N10-(bromoacetyl)-5,8-dideazafolate. Catalyzes the transfer of a formyl group from 10-formyltetrahydrofolate to 5-phospho-ribosyl-glycinamide (GAR), producing 5-phospho-ribosyl-N-formylglycinamide (FGAR) and tetrahydrofolate. The protein is Phosphoribosylglycinamide formyltransferase of Escherichia coli (strain K12).